The chain runs to 367 residues: Auxin efflux carrier component 8 (367 aa).

At Met1–Asp6 the chain is on the extracellular side. The chain crosses the membrane as a helical span at residues Ile7–Ser27. Residues Ala28–Gln38 lie on the Cytoplasmic side of the membrane. Residues Cys39–Ile59 traverse the membrane as a helical segment. (indol-3-yl)acetate is bound at residue Ile51. Topologically, residues Ser60 to Pro69 are extracellular. The chain crosses the membrane as a helical span at residues Lys70–Leu90. At Arg91–Trp105 the chain is on the cytoplasmic side. The helical transmembrane segment at Val106–Leu126 threads the bilayer. The (indol-3-yl)acetate site is built by Asn117 and Leu119. The Extracellular segment spans residues Ser127–Ser136. Residues Ile137 to Phe157 traverse the membrane as a helical segment. Tyr150 lines the (indol-3-yl)acetate pocket. The Cytoplasmic portion of the chain corresponds to Glu158–Thr227. The tract at residues Ser168–Glu194 is disordered. The segment covering Asp178–Glu194 has biased composition (acidic residues). Residues Leu228–Ile248 traverse the membrane as a helical segment. Topologically, residues Asp249–Ser251 are extracellular. Residues Ile252–Ala272 form a helical membrane-spanning segment. At Ser273 to Thr288 the chain is on the cytoplasmic side. The helical transmembrane segment at Met289–Leu309 threads the bilayer. Over Lys310 to Thr312 the chain is Extracellular. Residues Leu313–Ala333 traverse the membrane as a helical segment. Residues Val327 and Val328 each contribute to the (indol-3-yl)acetate site. Topologically, residues Lys334 to Ser344 are cytoplasmic. A helical membrane pass occupies residues Thr345–Leu365. Residues Asp366 to Leu367 are Extracellular-facing.

This sequence belongs to the auxin efflux carrier (TC 2.A.69.1) family. Homodimer. Expressed in veins of mature leaves. Strongly expressed in pollen.

The protein resides in the endoplasmic reticulum membrane. It localises to the cell membrane. With respect to regulation, auxin efflux carrier activity is competitively inhibited by naptalamate (N-1-naphthylphthalamic acid, NPA). Its function is as follows. Acts as a component of the auxin efflux carrier. Component of the intracellular auxin-transport pathway in the male gametophyte. Involved in the regulation of auxin homeostasis in pollen. Involved in the efflux of auxin from the endoplasmic reticulum into the cytoplasm. Binds auxins including indole-3-acetic acid (IAA), naphthaleneacetic acid (NAA) and the herbicide 2,4-dichlorophenoxyacetic acid (2,4-D), but barely indole-3-butyric acid (IBA) and 2-phenylacetic acid (PAA). PIN5 and PIN8 may have an antagonistic/compensatory activity. Involved in the control of vein patterning. Redundantly with PIN6, inhibits the vein-formation-promoting functions of PIN5. PIN5, PIN6, and PIN8 control vein network geometry, but they are expressed in mutually exclusive domains of leaf vascular cells. The protein is Auxin efflux carrier component 8 of Arabidopsis thaliana (Mouse-ear cress).